We begin with the raw amino-acid sequence, 256 residues long: Pimeloyl-[acyl-carrier protein] methyl ester esterase (256 aa).

In terms of domain architecture, AB hydrolase-1 spans 15-242 (HLVLLHGWGL…AAHAPFISHP (228 aa)). Residues tryptophan 22, 82 to 83 (SL), and 143 to 147 (FLALQ) each bind substrate. The Nucleophile role is filled by serine 82. Residues aspartate 207 and histidine 235 contribute to the active site. Histidine 235 lines the substrate pocket.

This sequence belongs to the AB hydrolase superfamily. Carboxylesterase BioH family. In terms of assembly, monomer.

The protein localises to the cytoplasm. It catalyses the reaction 6-carboxyhexanoyl-[ACP] methyl ester + H2O = 6-carboxyhexanoyl-[ACP] + methanol + H(+). It participates in cofactor biosynthesis; biotin biosynthesis. Its function is as follows. The physiological role of BioH is to remove the methyl group introduced by BioC when the pimeloyl moiety is complete. It allows to synthesize pimeloyl-ACP via the fatty acid synthetic pathway through the hydrolysis of the ester bonds of pimeloyl-ACP esters. The sequence is that of Pimeloyl-[acyl-carrier protein] methyl ester esterase from Salmonella choleraesuis (strain SC-B67).